The primary structure comprises 311 residues: Terpentetriene synthase (311 aa).

A DDXXD motif motif is present at residues 77–81 (DDRWD).

This sequence belongs to the terpene synthase family. As to quaternary structure, homodimer. The cofactor is Mg(2+).

It catalyses the reaction terpentedienyl diphosphate = terpentetriene + diphosphate. Its pathway is antibiotic biosynthesis. Functionally, involved in the production of the isoprenoid antibiotic terpentecin. Converts terpentedienol diphosphate (TDP) into terpentetriene (TTE). Can also accept geranylgeranyl diphosphate (GGDP) and farnesyl diphosphate (FDP) as substrates. This Kitasatospora griseola (Streptomyces griseolosporeus) protein is Terpentetriene synthase (cyc2).